Consider the following 327-residue polypeptide: MTHTLRVIFAGTPEFAAAALAAIHDAGFAAPLVLTQPDRPAGRGMKLQASAVKRYALEHGLPVAQPPSLRRAGKYPAEAAEAIELLRATPHDVMVVAAYGLLLPQEVLDIPRHGCINIHASLLPRWRGAAPIHRAIEAGDAETGVTLMQMDAGLDTGAMIQASRIAIAPDDTTATLHDRLAADGARLIVDALARLERDGTLAATPQPADGVTYAEKIGKHEAALDWRKPADVLARQVRAFDPFPGGVATLDGAAIKIWAAEPATGRGDAAPGTIVEAAPDGVIVACGTGALRVTQLQKPGGKRLPAREFLAGSPLAAGQRFALPDAG.

121–124 (SLLP) contributes to the (6S)-5,6,7,8-tetrahydrofolate binding site.

It belongs to the Fmt family.

The enzyme catalyses L-methionyl-tRNA(fMet) + (6R)-10-formyltetrahydrofolate = N-formyl-L-methionyl-tRNA(fMet) + (6S)-5,6,7,8-tetrahydrofolate + H(+). Functionally, attaches a formyl group to the free amino group of methionyl-tRNA(fMet). The formyl group appears to play a dual role in the initiator identity of N-formylmethionyl-tRNA by promoting its recognition by IF2 and preventing the misappropriation of this tRNA by the elongation apparatus. The sequence is that of Methionyl-tRNA formyltransferase from Burkholderia multivorans (strain ATCC 17616 / 249).